The primary structure comprises 138 residues: Large ribosomal subunit protein uL16 (138 aa).

A compositionally biased stretch (basic residues) spans 1–16 (MLIPRRVKHRKQHHPG). The interval 1–24 (MLIPRRVKHRKQHHPGRSGAATGG) is disordered.

Belongs to the universal ribosomal protein uL16 family. Part of the 50S ribosomal subunit.

Its function is as follows. Binds 23S rRNA and is also seen to make contacts with the A and possibly P site tRNAs. The sequence is that of Large ribosomal subunit protein uL16 from Paenarthrobacter aurescens (strain TC1).